A 532-amino-acid polypeptide reads, in one-letter code: Muscarinic acetylcholine receptor M5 (532 aa).

Residues 1 to 29 (MEGDSYHNATTVNGTPVNHQPLERHRLWE) are Extracellular-facing. A glycan (N-linked (GlcNAc...) asparagine) is linked at N8. The chain crosses the membrane as a helical span at residues 30-53 (VITIAAVTAVVSLITIVGNVLVMI). At 54 to 66 (SFKVNSQLKTVNN) the chain is on the cytoplasmic side. Residues 67–87 (YYLLSLACADLIIGIFSMNLY) form a helical membrane-spanning segment. The Extracellular portion of the chain corresponds to 88–104 (TTYILMGRWALGSLACD). A disulfide bridge links C103 with C183. A helical transmembrane segment spans residues 105–126 (LWLALDYVASNASVMNLLVISF). Topologically, residues 127–146 (DRYFSITRPLTYRAKRTPKR) are cytoplasmic. The helical transmembrane segment at 147–169 (AGIMIGLAWLISFILWAPAILCW) threads the bilayer. Residues 170 to 191 (QYLVGKRTVPLDECQIQFLSEP) are Extracellular-facing. Residues 192–214 (TITFGTAIAAFYIPVSVMTILYC) traverse the membrane as a helical segment. Over 215–443 (RIYRETEKRT…LVKERKAAQT (229 aa)) the chain is Cytoplasmic. The disordered stretch occupies residues 262 to 294 (AQRERNQASWSSSRRSTSTTGKPSQATGPSANW). Residues 270-281 (SWSSSRRSTSTT) show a composition bias toward low complexity. The segment covering 282 to 291 (GKPSQATGPS) has biased composition (polar residues). The chain crosses the membrane as a helical span at residues 444–464 (LSAILLAFIITWTPYNIMVLV). Residues 465–478 (STFCDKCVPVTLWH) are Extracellular-facing. The helical transmembrane segment at 479–498 (LGYWLCYVNSTVNPICYALC) threads the bilayer. Topologically, residues 499–532 (NRTFRKTFKMLLLCRWKKKKVEEKLYWQGNSKLP) are cytoplasmic. A phosphothreonine mark is found at T501 and T505.

This sequence belongs to the G-protein coupled receptor 1 family. Muscarinic acetylcholine receptor subfamily. CHRM5 sub-subfamily.

The protein localises to the cell membrane. The protein resides in the postsynaptic cell membrane. The muscarinic acetylcholine receptor mediates various cellular responses, including inhibition of adenylate cyclase, breakdown of phosphoinositides and modulation of potassium channels through the action of G proteins. Primary transducing effect is Pi turnover. The chain is Muscarinic acetylcholine receptor M5 (CHRM5) from Homo sapiens (Human).